Consider the following 272-residue polypeptide: Acyl-[acyl-carrier-protein]--UDP-N-acetylglucosamine O-acyltransferase (272 aa).

It belongs to the transferase hexapeptide repeat family. LpxA subfamily. As to quaternary structure, homotrimer.

It localises to the cytoplasm. It carries out the reaction a (3R)-hydroxyacyl-[ACP] + UDP-N-acetyl-alpha-D-glucosamine = a UDP-3-O-[(3R)-3-hydroxyacyl]-N-acetyl-alpha-D-glucosamine + holo-[ACP]. It participates in glycolipid biosynthesis; lipid IV(A) biosynthesis; lipid IV(A) from (3R)-3-hydroxytetradecanoyl-[acyl-carrier-protein] and UDP-N-acetyl-alpha-D-glucosamine: step 1/6. Involved in the biosynthesis of lipid A, a phosphorylated glycolipid that anchors the lipopolysaccharide to the outer membrane of the cell. This Methylobacterium radiotolerans (strain ATCC 27329 / DSM 1819 / JCM 2831 / NBRC 15690 / NCIMB 10815 / 0-1) protein is Acyl-[acyl-carrier-protein]--UDP-N-acetylglucosamine O-acyltransferase.